A 272-amino-acid chain; its full sequence is Shikimate dehydrogenase (NADP(+)) (272 aa).

Shikimate-binding positions include 20–22 and T67; that span reads TMS. The Proton acceptor role is filled by K71. Position 83 (E83) interacts with NADP(+). Positions 92 and 107 each coordinate shikimate. NADP(+) is bound by residues 129–133, 153–158, and L216; these read GAGGA and NRTKSK. Y218 is a shikimate binding site. Residue G239 coordinates NADP(+).

It belongs to the shikimate dehydrogenase family. As to quaternary structure, homodimer.

The enzyme catalyses shikimate + NADP(+) = 3-dehydroshikimate + NADPH + H(+). It participates in metabolic intermediate biosynthesis; chorismate biosynthesis; chorismate from D-erythrose 4-phosphate and phosphoenolpyruvate: step 4/7. Functionally, involved in the biosynthesis of the chorismate, which leads to the biosynthesis of aromatic amino acids. Catalyzes the reversible NADPH linked reduction of 3-dehydroshikimate (DHSA) to yield shikimate (SA). This chain is Shikimate dehydrogenase (NADP(+)), found in Maridesulfovibrio salexigens (strain ATCC 14822 / DSM 2638 / NCIMB 8403 / VKM B-1763) (Desulfovibrio salexigens).